The following is a 124-amino-acid chain: Small ribosomal subunit protein uS12 (124 aa).

Positions 1–30 (MPTIQQLVRKGRQDKVAKTKTAALKGSPQR) are disordered. Aspartate 89 carries the post-translational modification 3-methylthioaspartic acid. The tract at residues 102–124 (ADTQGVKNRKQARSRYGAKKEKS) is disordered. A compositionally biased stretch (basic residues) spans 108 to 118 (KNRKQARSRYG).

Belongs to the universal ribosomal protein uS12 family. Part of the 30S ribosomal subunit. Contacts proteins S8 and S17. May interact with IF1 in the 30S initiation complex.

In terms of biological role, with S4 and S5 plays an important role in translational accuracy. Interacts with and stabilizes bases of the 16S rRNA that are involved in tRNA selection in the A site and with the mRNA backbone. Located at the interface of the 30S and 50S subunits, it traverses the body of the 30S subunit contacting proteins on the other side and probably holding the rRNA structure together. The combined cluster of proteins S8, S12 and S17 appears to hold together the shoulder and platform of the 30S subunit. This is Small ribosomal subunit protein uS12 from Saccharopolyspora erythraea (strain ATCC 11635 / DSM 40517 / JCM 4748 / NBRC 13426 / NCIMB 8594 / NRRL 2338).